Reading from the N-terminus, the 330-residue chain is Class III chitinase ARB_03514 (330 aa).

Residues 1–22 (MSSVKNILSFVALFAGVKTAYA) form the signal peptide. The GH18 domain occupies 23-314 (GLNSPGHNNV…SAVKGALSAG (292 aa)). N-linked (GlcNAc...) asparagine glycans are attached at residues N61 and N135. The active-site Proton donor is E155. N278 and N302 each carry an N-linked (GlcNAc...) asparagine glycan.

The protein belongs to the glycosyl hydrolase 18 family. Chitinase class III subfamily. Monomer.

The protein localises to the secreted. It carries out the reaction Random endo-hydrolysis of N-acetyl-beta-D-glucosaminide (1-&gt;4)-beta-linkages in chitin and chitodextrins.. Secreted chitinase involved in the degradation of chitin, a component of the cell walls of fungi and exoskeletal elements of some animals (including worms and arthropods). Plays a morphogenetic role during apical growth, cell division and differentiation (cell wall morphogenesis). This Arthroderma benhamiae (strain ATCC MYA-4681 / CBS 112371) (Trichophyton mentagrophytes) protein is Class III chitinase ARB_03514.